Consider the following 374-residue polypeptide: Resuscitation-promoting factor Rpf2 (374 aa).

The first 40 residues, 1-40 (MAPHQKSRINRINSTRSVPLRLATGGVLATLLIGGVTAAA), serve as a signal peptide directing secretion. The G5 domain occupies 210–290 (IDRVDNTEIT…PATISRGTKT (81 aa)). Residues 228–252 (PTYVDDPEAPAGDETVVEEGAPGTK) form a disordered region.

The protein belongs to the transglycosylase family. Rpf subfamily. Post-translationally, glycosylated; by Pmt, by at least mannose and galactose. Other unidentified sugars may also be present. In terms of processing, may be subject to proteolytic cleavage as multiple shorter forms are detected in gels. At least 3 non-glycosylated protein isoforms of 35, 40 and 42 kDa are seen in gels.

The protein resides in the secreted. It is found in the cell surface. Factor that stimulates resuscitation of dormant cells. Has peptidoglycan (PG) hydrolytic activity. Active in the pM concentration range. Has little to no effect on actively-growing cells. PG fragments could either directly activate the resuscitation pathway of dormant bacteria or serve as a substrate for endogenous Rpf, resulting in low molecular weight products with resuscitation activity. The sequence is that of Resuscitation-promoting factor Rpf2 (rpf2) from Corynebacterium glutamicum (strain ATCC 13032 / DSM 20300 / JCM 1318 / BCRC 11384 / CCUG 27702 / LMG 3730 / NBRC 12168 / NCIMB 10025 / NRRL B-2784 / 534).